The primary structure comprises 549 residues: Glucose-6-phosphate isomerase (549 aa).

Glu355 (proton donor) is an active-site residue. Catalysis depends on residues His386 and Lys514.

This sequence belongs to the GPI family.

It localises to the cytoplasm. The catalysed reaction is alpha-D-glucose 6-phosphate = beta-D-fructose 6-phosphate. Its pathway is carbohydrate biosynthesis; gluconeogenesis. The protein operates within carbohydrate degradation; glycolysis; D-glyceraldehyde 3-phosphate and glycerone phosphate from D-glucose: step 2/4. Its function is as follows. Catalyzes the reversible isomerization of glucose-6-phosphate to fructose-6-phosphate. In Desulfatibacillum aliphaticivorans, this protein is Glucose-6-phosphate isomerase.